The primary structure comprises 393 residues: S-adenosylmethionine synthase (393 aa).

H16 is an ATP binding site. D18 lines the Mg(2+) pocket. E44 lines the K(+) pocket. Positions 57 and 100 each coordinate L-methionine. Residues 100 to 110 (QSPDIVMGVDG) form a flexible loop region. Residues 165-167 (DAK), 231-232 (RF), D240, 246-247 (RK), and K267 contribute to the ATP site. D240 provides a ligand contact to L-methionine. Residue K271 participates in L-methionine binding.

It belongs to the AdoMet synthase family. As to quaternary structure, homotetramer; dimer of dimers. It depends on Mg(2+) as a cofactor. K(+) serves as cofactor.

The protein resides in the cytoplasm. It catalyses the reaction L-methionine + ATP + H2O = S-adenosyl-L-methionine + phosphate + diphosphate. The protein operates within amino-acid biosynthesis; S-adenosyl-L-methionine biosynthesis; S-adenosyl-L-methionine from L-methionine: step 1/1. Functionally, catalyzes the formation of S-adenosylmethionine (AdoMet) from methionine and ATP. The overall synthetic reaction is composed of two sequential steps, AdoMet formation and the subsequent tripolyphosphate hydrolysis which occurs prior to release of AdoMet from the enzyme. This chain is S-adenosylmethionine synthase, found in Coxiella burnetii (strain Dugway 5J108-111).